A 187-amino-acid chain; its full sequence is Shikimate kinase (187 aa).

19-24 is a binding site for ATP; it reads GSGKST. Residue serine 23 coordinates Mg(2+). Substrate-binding residues include aspartate 41, arginine 65, and glycine 87. Arginine 124 contributes to the ATP binding site. A substrate-binding site is contributed by arginine 143. Arginine 160 serves as a coordination point for ATP.

It belongs to the shikimate kinase family. In terms of assembly, monomer. It depends on Mg(2+) as a cofactor.

The protein resides in the cytoplasm. The catalysed reaction is shikimate + ATP = 3-phosphoshikimate + ADP + H(+). It participates in metabolic intermediate biosynthesis; chorismate biosynthesis; chorismate from D-erythrose 4-phosphate and phosphoenolpyruvate: step 5/7. In terms of biological role, catalyzes the specific phosphorylation of the 3-hydroxyl group of shikimic acid using ATP as a cosubstrate. The sequence is that of Shikimate kinase from Rippkaea orientalis (strain PCC 8801 / RF-1) (Cyanothece sp. (strain PCC 8801)).